The following is a 125-amino-acid chain: Cytochrome c oxidase assembly factor 6 homolog (125 aa).

The residue at position 2 (Gly-2) is an N-acetylalanine. Residues Arg-55–Phe-98 form the CHCH domain. A Cx9C motif motif is present at residues Cys-58–Cys-68. 2 disulfide bridges follow: Cys-58–Cys-90 and Cys-68–Cys-79. Residues Cys-79–Cys-90 carry the Cx10C motif motif.

Belongs to the cytochrome c oxidase subunit 6B family. Interacts with COA1. Found in a complex with TMEM177, COX20, MT-CO2/COX2, COX18, SCO1 and SCO2. Interacts with MT-CO2/COX2 and SCO2. Interacts with SCO1. Interacts with COX20 in a MT-CO2/COX2- and COX18-dependent manner. Interacts with COX16.

The protein resides in the mitochondrion intermembrane space. Involved in the maturation of the mitochondrial respiratory chain complex IV subunit MT-CO2/COX2. Thereby, may regulate early steps of complex IV assembly. Mitochondrial respiratory chain complex IV or cytochrome c oxidase is the component of the respiratory chain that catalyzes the transfer of electrons from intermembrane space cytochrome c to molecular oxygen in the matrix and as a consequence contributes to the proton gradient involved in mitochondrial ATP synthesis. May also be required for efficient formation of respiratory supercomplexes comprised of complexes III and IV. This Homo sapiens (Human) protein is Cytochrome c oxidase assembly factor 6 homolog (COA6).